The sequence spans 364 residues: Acidic fibroblast growth factor intracellular-binding protein (364 aa).

The residue at position 2 (T2) is an N-acetylthreonine.

Binds to internalized FGF1; this interaction is increased in the presence of CSNKB, suggesting a possible cooperative interaction between CSNKB and FIBP in binding to FGF1. In terms of tissue distribution, highly expressed in heart, skeletal muscle and pancreas. Expressed at lower levels in brain. Also found in placenta, liver and kidney.

The protein localises to the nucleus. It is found in the endomembrane system. Functionally, may be involved in mitogenic function of FGF1. May mediate with IER2 FGF-signaling in the establishment of laterality in the embryo. The polypeptide is Acidic fibroblast growth factor intracellular-binding protein (FIBP) (Homo sapiens (Human)).